Here is a 904-residue protein sequence, read N- to C-terminus: Envelope glycoprotein B (904 aa).

A signal peptide spans 1 to 30 (MHQGAPSWGRRWFVVWALLGLTLGVLVASA). The Virion surface segment spans residues 31–774 (APTSPGTPGV…SGVSSFMSNP (744 aa)). The span at 32–52 (PTSPGTPGVAAATQAANGGPA) shows a compositional bias: low complexity. Residues 32–88 (PTSPGTPGVAAATQAANGGPATPAPPPLGAAPTGDPKPKKNKKPKNPTPPRPAGDNA) form a disordered region. Residues asparagine 87 and asparagine 141 are each glycosylated (N-linked (GlcNAc...) asparagine; by host). Disulfide bonds link cysteine 116–cysteine 573, cysteine 133–cysteine 529, cysteine 207–cysteine 271, cysteine 364–cysteine 412, and cysteine 596–cysteine 633. Involved in fusion and/or binding to host membrane stretches follow at residues 173 to 179 (VWFGHRY) and 258 to 265 (RVEAFHRY). Asparagine 398 and asparagine 430 each carry an N-linked (GlcNAc...) asparagine; by host glycan. Residues 470 to 492 (REQSRKPPNPTPPPPGASANASV) are disordered. Pro residues predominate over residues 476-485 (PPNPTPPPPG). Asparagine 489 carries an N-linked (GlcNAc...) asparagine; by host glycan. Residue asparagine 674 is glycosylated (N-linked (GlcNAc...) asparagine; by host). The hydrophobic membrane proximal region stretch occupies residues 719 to 772 (IDTVIHADANAAMFAGLGAFFEGMGDLGRAVGKVVMGIVGGVVSAVSGVSSFMS). Residues 775-795 (FGALAVGLLVLAGLAAAFFAF) traverse the membrane as a helical segment. The Intravirion portion of the chain corresponds to 796-904 (RYVMRLQSNP…KDGDADEDDL (109 aa)). The short motif at 849–852 (YMAL) is the Golgi targeting element. The segment at 883-904 (KRRNTNYTQVPNKDGDADEDDL) is disordered. Threonine 887 bears the Phosphothreonine; by host mark. Positions 889-892 (YTQV) match the Internalization motif motif.

The protein belongs to the herpesviridae glycoprotein B family. As to quaternary structure, homotrimer; disulfide-linked. Interacts with host receptor MYH9/NMMHC-IIA. Interacts with host receptor MYH10/NMMHC-IIB. Binds to heparan sulfate proteoglycans. Interacts with gH/gL heterodimer. Interacts with the host coreceptor PILRA. The cytoplasmic tail is phosphorylated by the viral kinase US3. Phosphorylation may be linked to a down-regulation of gB expression on cell surface. Post-translationally, ubiquitinated.

The protein resides in the virion membrane. It is found in the host cell membrane. It localises to the host endosome membrane. Its subcellular location is the host Golgi apparatus membrane. Its function is as follows. Envelope glycoprotein that forms spikes at the surface of virion envelope and binds to the host cell entry receptors MYH9/NMMHC-IIA and MYH10/NMMHC-IIB, promoting the virus entry into host cells. Essential for the initial attachment to heparan sulfate moieties of the host cell surface proteoglycans. Involved in fusion of viral and cellular membranes leading to virus entry into the host cell: following initial binding to its host cell entry receptors, membrane fusion is mediated by the fusion machinery composed at least of gB and the heterodimer gH/gL. May be involved in the fusion between the virion envelope and the outer nuclear membrane during virion egress. Also plays a role, together with gK, in virus-induced cell-to-cell fusion (syncytia formation). The chain is Envelope glycoprotein B from Human herpesvirus 1 (strain KOS) (HHV-1).